The following is a 550-amino-acid chain: Glucose-6-phosphate isomerase (550 aa).

The Proton donor role is filled by E357. Active-site residues include H389 and K509.

Belongs to the GPI family.

Its subcellular location is the cytoplasm. It carries out the reaction alpha-D-glucose 6-phosphate = beta-D-fructose 6-phosphate. The protein operates within carbohydrate biosynthesis; gluconeogenesis. Its pathway is carbohydrate degradation; glycolysis; D-glyceraldehyde 3-phosphate and glycerone phosphate from D-glucose: step 2/4. Its function is as follows. Catalyzes the reversible isomerization of glucose-6-phosphate to fructose-6-phosphate. The polypeptide is Glucose-6-phosphate isomerase (Anaeromyxobacter dehalogenans (strain 2CP-C)).